The sequence spans 539 residues: uncharacterized protein (539 aa).

Residues 34-63 (AASEVSPIPQERPTTSLRKPTPRVQRPATD) are disordered. The next 11 helical transmembrane spans lie at 103 to 123 (FATP…TTVF), 141 to 161 (MTAT…LDTV), 184 to 204 (ILLL…GILL), 244 to 264 (GIFH…IFLN), 277 to 299 (FLGA…IIYI), 325 to 345 (LAVP…LVTF), 360 to 380 (VLST…AAAA), 399 to 419 (THVS…ILFL), 434 to 454 (VVAL…ADNT), 470 to 490 (IGGV…AIIL), and 496 to 516 (WGLY…AGVE).

Belongs to the multi antimicrobial extrusion (MATE) (TC 2.A.66.1) family.

Its subcellular location is the vacuole membrane. This is an uncharacterized protein from Schizosaccharomyces pombe (strain 972 / ATCC 24843) (Fission yeast).